Reading from the N-terminus, the 538-residue chain is MGLLLLVLILTPSLAAYRHPDFPLLEKAQQLLQSTGSPYSTNCWLCTSSSTETPGTAYPASPREWTSIEAELHISYRWDPNLKGLMRPANSLLSMVKQDFPDIRQKPPIFGPIFTNINLMGIAPICVMAKRKNGTNVGTLPSTVCNVTFTVDSNQQTYQTYTHNQFRHQPRFPKPPNITFPQGTLLDKSSRFCQGRPSSCSTRNFWFRPADYNQCLQISNLSSTAEWVLLDQTRNSLFWENKTKGANQSQTPCVQVLAGMTIATSYLGISAVSEFFGTSLTPLFHFHISTCLKTQGAFYICGQSIHQCLPSNWTGTCTIGYVTPDIFIAPGNLSLPIPIYGNSQLPRVRRAIHFIPLLAGLGILAGTGTGIAGITKASLTYSQLSKEIANNIDTMAKALTTMQEQIDSLAAVVLQNRRGLDMLTAAQGGICLALDEKCCFWVNQSGKVQDNIRQLLNQASSLRERATQGWLNWEGTWKWFSWVLPLTGPLVSLLLLLLFGPCLLNLITQFVSSRLQAIKLQTNLSAGRHPRNIQESPF.

The first 15 residues, 1–15 (MGLLLLVLILTPSLA), serve as a signal peptide directing secretion. Topologically, residues 16-478 (AYRHPDFPLL…GWLNWEGTWK (463 aa)) are extracellular. Residues 43-46 (CWLC) carry the CXXC motif. Intrachain disulfides connect C43-C46, C43-C439, and C431-C438. N-linked (GlcNAc...) asparagine glycosylation is found at N133, N146, N177, N220, N241, N247, N312, and N332. Positions 354-374 (FIPLLAGLGILAGTGTGIAGI) are fusion peptide. A CKS-17 motif is present at residues 414–430 (LQNRRGLDMLTAAQGGI). The CX6CC motif lies at 431–439 (CLALDEKCC). N443 is a glycosylation site (N-linked (GlcNAc...) asparagine). Residues 479 to 499 (WFSWVLPLTGPLVSLLLLLLF) traverse the membrane as a helical segment. Topologically, residues 500–538 (GPCLLNLITQFVSSRLQAIKLQTNLSAGRHPRNIQESPF) are cytoplasmic.

Belongs to the gamma type-C retroviral envelope protein family. HERV class-I FRD env subfamily. As to quaternary structure, the surface and transmembrane proteins form a heterodimer. They are attached by non-covalent interactions or by a labile interchain disulfide bond. Post-translationally, specific enzymatic cleavages in vivo yield the mature SU and TM proteins. The CXXC motif is highly conserved across a broad range of retroviral envelope proteins. It is thought to participate in the formation of a labile disulfide bond possibly with the CX6CC motif present in the transmembrane protein.

Its subcellular location is the virion. It localises to the cell membrane. In terms of biological role, this endogenous retroviral envelope protein has retained its original fusogenic properties and participates in trophoblast fusion and the formation of a syncytium during placenta morphogenesis. The interaction with MFSD2A is apparently important for this process. Functionally, endogenous envelope proteins may have kept, lost or modified their original function during evolution but this one can still make pseudotypes with MLV, HIV-1 or SIV-1 virions and confer infectivity. Retroviral envelope proteins mediate receptor recognition and membrane fusion during early infection. The surface protein mediates receptor recognition, while the transmembrane protein anchors the envelope heterodimer to the viral membrane through one transmembrane domain. The other hydrophobic domain, called fusion peptide, mediates fusion of the viral membrane with the target cell membrane. The chain is Syncytin-2 (ERVFRD-1) from Pan troglodytes (Chimpanzee).